Here is a 354-residue protein sequence, read N- to C-terminus: Adenine deaminase (354 aa).

Residues His-20, His-22, and His-200 each contribute to the Zn(2+) site. Glu-203 (proton donor) is an active-site residue. Asp-281 contacts Zn(2+). Position 282 (Asp-282) interacts with substrate.

Belongs to the metallo-dependent hydrolases superfamily. Adenosine and AMP deaminases family. Adenine deaminase type 2 subfamily. Zn(2+) serves as cofactor.

The catalysed reaction is adenine + H2O + H(+) = hypoxanthine + NH4(+). Its function is as follows. Catalyzes the hydrolytic deamination of adenine to hypoxanthine. Plays an important role in the purine salvage pathway and in nitrogen catabolism. The chain is Adenine deaminase from Cupriavidus metallidurans (strain ATCC 43123 / DSM 2839 / NBRC 102507 / CH34) (Ralstonia metallidurans).